The primary structure comprises 211 residues: Calcipressin-like protein (211 aa).

2 positions are modified to phosphoserine: Ser-113 and Ser-117. At Thr-182 the chain carries Phosphothreonine.

It belongs to the RCAN family.

In terms of biological role, inhibits calcineurin-dependent transcriptional responses by binding to the catalytic domain of calcineurin. The protein is Calcipressin-like protein (RCN1) of Saccharomyces cerevisiae (strain ATCC 204508 / S288c) (Baker's yeast).